The chain runs to 165 residues: MEDLLVVGQIINTHGLRGEMKVMPLTEDMRRFDYLEYVILKGQKIKVEGVKYFKDKVILKLQGINSIEEAEKLKRTYLEIEREDAIELEEDEYFIVDLVGCTVVDTEGFEYGKIKDVIQTPSNDVYWVQGKKEVLVPVLKDIVLDINMDEKLITIRPSGEWQYED.

The PRC barrel domain maps to 90–161 (EDEYFIVDLV…LITIRPSGEW (72 aa)).

The protein belongs to the RimM family. In terms of assembly, binds ribosomal protein uS19.

The protein resides in the cytoplasm. Functionally, an accessory protein needed during the final step in the assembly of 30S ribosomal subunit, possibly for assembly of the head region. Essential for efficient processing of 16S rRNA. May be needed both before and after RbfA during the maturation of 16S rRNA. It has affinity for free ribosomal 30S subunits but not for 70S ribosomes. This Clostridium perfringens (strain SM101 / Type A) protein is Ribosome maturation factor RimM.